Here is a 115-residue protein sequence, read N- to C-terminus: MEEKWKLSKKDTTASSSSSKSKFSRSFSTSASSTKSPIFVRSSSTKCSVPSSSSSSSSSSSISRSFSRKERRSSSSSSSSITQKYSSLAKEQKARFYIMRRCVAMLVCWHKHGDS.

Basic and acidic residues predominate over residues 1 to 12; that stretch reads MEEKWKLSKKDT. The disordered stretch occupies residues 1–89; it reads MEEKWKLSKK…SITQKYSSLA (89 aa). Over residues 13-65 the composition is skewed to low complexity; that stretch reads TASSSSSKSKFSRSFSTSASSTKSPIFVRSSSTKCSVPSSSSSSSSSSSISRS. The chain crosses the membrane as a helical span at residues 44–63; it reads STKCSVPSSSSSSSSSSSIS. A required for DVL/RTFL small polypeptide activity region spans residues 80–111; the sequence is SITQKYSSLAKEQKARFYIMRRCVAMLVCWHK.

It belongs to the DVL/RTFL small polypeptides family.

The protein localises to the cell membrane. Small polypeptide acting as a regulatory molecule which coordinates cellular responses required for differentiation, growth and development, probably by restricting polar cell proliferation in lateral organs and coordinating socket cell recruitment and differentiation at trichome sites. In Arabidopsis thaliana (Mouse-ear cress), this protein is Small polypeptide DEVIL 13.